Consider the following 232-residue polypeptide: Large ribosomal subunit protein uL1 (232 aa).

Belongs to the universal ribosomal protein uL1 family. In terms of assembly, part of the 50S ribosomal subunit.

In terms of biological role, binds directly to 23S rRNA. The L1 stalk is quite mobile in the ribosome, and is involved in E site tRNA release. Protein L1 is also a translational repressor protein, it controls the translation of the L11 operon by binding to its mRNA. The chain is Large ribosomal subunit protein uL1 from Xanthomonas oryzae pv. oryzae (strain KACC10331 / KXO85).